A 685-amino-acid polypeptide reads, in one-letter code: Polyphosphate kinase (685 aa).

Asn45 is an ATP binding site. Mg(2+) contacts are provided by Arg375 and Arg405. Residue His435 is the Phosphohistidine intermediate of the active site. ATP-binding residues include Tyr468, Arg564, and His592.

It belongs to the polyphosphate kinase 1 (PPK1) family. Mg(2+) is required as a cofactor. In terms of processing, an intermediate of this reaction is the autophosphorylated ppk in which a phosphate is covalently linked to a histidine residue through a N-P bond.

The enzyme catalyses [phosphate](n) + ATP = [phosphate](n+1) + ADP. Functionally, catalyzes the reversible transfer of the terminal phosphate of ATP to form a long-chain polyphosphate (polyP). The sequence is that of Polyphosphate kinase from Neisseria meningitidis serogroup A / serotype 4A (strain DSM 15465 / Z2491).